We begin with the raw amino-acid sequence, 390 residues long: Flap endonuclease 1-1 (390 aa).

An N-domain region spans residues M1–K108. Position 34 (D34) interacts with Mg(2+). R74 is a DNA binding site. 5 residues coordinate Mg(2+): D90, E162, E164, D183, and D185. Residues Q126–F254 form an I-domain region. DNA is bound at residue E162. Residues G232 and D234 each coordinate DNA. D234 is a Mg(2+) binding site. The tract at residues F348–F356 is interaction with PCNA. Residues T359–I390 form a disordered region.

This sequence belongs to the XPG/RAD2 endonuclease family. FEN1 subfamily. In terms of assembly, interacts with PCNA. Three molecules of FEN1 bind to one PCNA trimer with each molecule binding to one PCNA monomer. PCNA stimulates the nuclease activity without altering cleavage specificity. The cofactor is Mg(2+). In terms of processing, phosphorylated. Phosphorylation upon DNA damage induces relocalization to the nuclear plasma.

Its subcellular location is the nucleus. The protein resides in the nucleolus. It is found in the nucleoplasm. It localises to the mitochondrion. Structure-specific nuclease with 5'-flap endonuclease and 5'-3' exonuclease activities involved in DNA replication and repair. During DNA replication, cleaves the 5'-overhanging flap structure that is generated by displacement synthesis when DNA polymerase encounters the 5'-end of a downstream Okazaki fragment. It enters the flap from the 5'-end and then tracks to cleave the flap base, leaving a nick for ligation. Also involved in the long patch base excision repair (LP-BER) pathway, by cleaving within the apurinic/apyrimidinic (AP) site-terminated flap. Acts as a genome stabilization factor that prevents flaps from equilibrating into structures that lead to duplications and deletions. Also possesses 5'-3' exonuclease activity on nicked or gapped double-stranded DNA, and exhibits RNase H activity. Also involved in replication and repair of rDNA and in repairing mitochondrial DNA. The chain is Flap endonuclease 1-1 from Paramecium tetraurelia.